A 495-amino-acid chain; its full sequence is uncharacterized protein (495 aa).

A signal peptide spans 1–17 (MRTLSLLILFLSTFLFA).

This is an uncharacterized protein from Aquifex aeolicus (strain VF5).